The following is a 171-amino-acid chain: uncharacterized protein (171 aa).

A helical transmembrane segment spans residues 21-43 (GVAASLLILLAVYTIFQSTVVIA).

The protein localises to the membrane. This is an uncharacterized protein from Archaeoglobus fulgidus (strain ATCC 49558 / DSM 4304 / JCM 9628 / NBRC 100126 / VC-16).